Here is a 442-residue protein sequence, read N- to C-terminus: Methionine aminopeptidase 2-1 (442 aa).

The segment at 1 to 92 (MAAQASEELE…ISELFPNNQY (92 aa)) is disordered. Residues 15–25 (NGQNGHAQEQV) show a composition bias toward polar residues. A compositionally biased stretch (acidic residues) spans 30–47 (EAADNDDSEDDEKEEEGG). Basic residues predominate over residues 56 to 72 (AKKKKKRKPKKKKKGGA). Histidine 195 is a substrate binding site. 3 residues coordinate a divalent metal cation: aspartate 215, aspartate 226, and histidine 295. Histidine 303 contributes to the substrate binding site. Residues glutamate 328 and glutamate 423 each contribute to the a divalent metal cation site.

The protein belongs to the peptidase M24A family. Methionine aminopeptidase eukaryotic type 2 subfamily. Co(2+) is required as a cofactor. The cofactor is Zn(2+). Requires Mn(2+) as cofactor. Fe(2+) serves as cofactor.

It is found in the cytoplasm. The enzyme catalyses Release of N-terminal amino acids, preferentially methionine, from peptides and arylamides.. Its function is as follows. Cotranslationally removes the N-terminal methionine from nascent proteins. The N-terminal methionine is often cleaved when the second residue in the primary sequence is small and uncharged (Met-Ala-, Cys, Gly, Pro, Ser, Thr, or Val). The sequence is that of Methionine aminopeptidase 2-1 from Talaromyces marneffei (strain ATCC 18224 / CBS 334.59 / QM 7333) (Penicillium marneffei).